The chain runs to 367 residues: Apurinic-apyrimidinic endonuclease 1 (367 aa).

9 residues coordinate Zn(2+): H83, H123, E158, D192, H195, H229, D242, H244, and E274. The disordered stretch occupies residues 312–367 (DTLQKLGAKSRKEQLDKFEVKQKKRAGGTKRKKATAEPSDNDILSQMTKKRKTKKE). The span at 321–332 (SRKEQLDKFEVK) shows a compositional bias: basic and acidic residues. Positions 333–344 (QKKRAGGTKRKK) are enriched in basic residues. S356 carries the phosphoserine modification.

It belongs to the AP endonuclease 2 family. As to quaternary structure, monomer. Zn(2+) is required as a cofactor.

The protein localises to the nucleus. Functionally, DNA repair enzyme that cleaves apurinic/apyrimidinic (AP) sites and removes 3'-blocking groups present at single strand breaks of damaged DNA. APN1 accounts for &gt; 97% of both apurinic/apyrimidinic (AP) endonuclease and DNA 3'-repair diesterase activities. This Saccharomyces cerevisiae (strain ATCC 204508 / S288c) (Baker's yeast) protein is Apurinic-apyrimidinic endonuclease 1 (APN1).